Here is a 321-residue protein sequence, read N- to C-terminus: Ribose-phosphate pyrophosphokinase (321 aa).

ATP is bound by residues 39–41 and 98–99; these read DGE and RQ. His-132 and Asp-170 together coordinate Mg(2+). The active site involves Lys-195. Residues Arg-197, Asp-221, and 225–229 contribute to the D-ribose 5-phosphate site; that span reads DTGGT.

It belongs to the ribose-phosphate pyrophosphokinase family. Class I subfamily. Homohexamer. It depends on Mg(2+) as a cofactor.

It localises to the cytoplasm. It carries out the reaction D-ribose 5-phosphate + ATP = 5-phospho-alpha-D-ribose 1-diphosphate + AMP + H(+). It functions in the pathway metabolic intermediate biosynthesis; 5-phospho-alpha-D-ribose 1-diphosphate biosynthesis; 5-phospho-alpha-D-ribose 1-diphosphate from D-ribose 5-phosphate (route I): step 1/1. Its function is as follows. Involved in the biosynthesis of the central metabolite phospho-alpha-D-ribosyl-1-pyrophosphate (PRPP) via the transfer of pyrophosphoryl group from ATP to 1-hydroxyl of ribose-5-phosphate (Rib-5-P). The polypeptide is Ribose-phosphate pyrophosphokinase (Mycoplasmopsis pulmonis (strain UAB CTIP) (Mycoplasma pulmonis)).